The primary structure comprises 314 residues: MIFDGFIKNFIYDPVSFIGILIFYFLLINLPISLISLFNKKSSSYVRLITILINLFIALQLISRWIISGHFPISNLYESLYFLVWGITLGQLLIEKEYSTPIIPAIAIPIELLTIAFACFVLPEDLKLSSNLVPALRSSWLVMHVSVVMLSYAALIMGSLLSASVLFINNSQPLQLRSSSMGVGGFKISNSYSTNNVIEPINFSHSEELDTLSYRSILVGFVLLTLGLITGAIWANEAWGTWWSWDPKETWAFISWLFYAAYLHMRISRGWQGRRPALLATSGFFVVLICYIGVNFLGVGLHSYGWIFGIFNLF.

Helical transmembrane passes span 15-35, 48-68, 73-93, 102-122, 148-168, 216-236, 250-267, and 277-297; these read VSFIGILIFYFLLINLPISLI, LITILINLFIALQLISRWIIS, ISNLYESLYFLVWGITLGQLL, IIPAIAIPIELLTIAFACFVL, VMLSYAALIMGSLLSASVLFI, SILVGFVLLTLGLITGAIWAN, TWAFISWLFYAAYLHMRI, and ALLATSGFFVVLICYIGVNFL.

The protein belongs to the CcmF/CycK/Ccl1/NrfE/CcsA family. As to quaternary structure, may interact with ccs1.

It localises to the cellular thylakoid membrane. Its function is as follows. Required during biogenesis of c-type cytochromes (cytochrome c6 and cytochrome f) at the step of heme attachment. The sequence is that of Cytochrome c biogenesis protein CcsA from Prochlorococcus marinus subsp. pastoris (strain CCMP1986 / NIES-2087 / MED4).